Consider the following 990-residue polypeptide: Pentatricopeptide repeat-containing protein At4g33170 (990 aa).

PPR repeat units lie at residues 73-107 (ERFLINNLISMYSKCGSLTYARRVFDKMPDRDLVS), 109-139 (NSILAAYAQSSECVVENIQQAFLLFRILRQD), 144-178 (SRMTLSPMLKLCLHSGYVWASESFHGYACKIGLDG), 179-209 (DEFVAGALVNIYLKFGKVKEGKVLFEEMPYR), 210-244 (DVVLWNLMLKAYLEMGFKEEAIDLSSAFHSSGLNP), 279-313 (EIIFRNKGLSEYLHSGQYSALLKCFADMVESDVEC), 314-348 (DQVTFILMLATAVKVDSLALGQQVHCMALKLGLDL), 349-379 (MLTVSNSLINMYCKLRKFGFARTVFDNMSER), 380-414 (DLISWNSVIAGIAQNGLEVEAVCLFMQLLRCGLKP), 415-450 (DQYTMTSVLKAASSLPEGLSLSKQVHVHAIKINNVS), 451-477 (DSFVSTALIDAYSRNRCMKEAEILFER), 481-515 (DLVAWNAMMAGYTQSHDGHKTLKLFALMHKQGERS), 516-550 (DDFTLATVFKTCGFLFAINQGKQVHAYAIKSGYDL), 551-581 (DLWVSSGILDMYVKCGDMSAAQFAFDSIPVP), 582-616 (DDVAWTTMISGCIENGEEERAFHVFSQMRLMGVLP), 617-651 (DEFTIATLAKASSCLTALEQGRQIHANALKLNCTN), 652-682 (DPFVGTSLVDMYAKCGSIDDAYCLFKRIEMM), 683-717 (NITAWNAMLVGLAQHGEGKETLQLFKQMKSLGIKP), 718-753 (DKVTFIGVLSACSHSGLVSEAYKHMRSMHGDYGIKP), and 754-788 (EIEHYSCLADALGRAGLVKQAENLIESMSMEASAS). The tract at residues 789-864 (MYRTLLAACR…DPGFSWIEVK (76 aa)) is type E motif. The type E(+) motif stretch occupies residues 865 to 895 (NKIHIFVVDDRSNRQTELIYRKVKDMIRDIK). The tract at residues 896 to 990 (QEGYVPETDF…DGICSCGDYW (95 aa)) is type DYW motif.

Belongs to the PPR family. PCMP-H subfamily.

In Arabidopsis thaliana (Mouse-ear cress), this protein is Pentatricopeptide repeat-containing protein At4g33170 (PCMP-H53).